The following is a 407-amino-acid chain: Peptidase T (407 aa).

Position 82 (histidine 82) interacts with Zn(2+). Residue aspartate 84 is part of the active site. Aspartate 143 contributes to the Zn(2+) binding site. Glutamate 177 acts as the Proton acceptor in catalysis. Residues glutamate 178, aspartate 200, and histidine 382 each coordinate Zn(2+).

It belongs to the peptidase M20B family. The cofactor is Zn(2+).

The protein localises to the cytoplasm. It catalyses the reaction Release of the N-terminal residue from a tripeptide.. Functionally, cleaves the N-terminal amino acid of tripeptides. The sequence is that of Peptidase T from Streptococcus pyogenes serotype M6 (strain ATCC BAA-946 / MGAS10394).